Reading from the N-terminus, the 188-residue chain is Ribosome-recycling factor (188 aa).

It belongs to the RRF family.

It is found in the cytoplasm. Functionally, responsible for the release of ribosomes from messenger RNA at the termination of protein biosynthesis. May increase the efficiency of translation by recycling ribosomes from one round of translation to another. The protein is Ribosome-recycling factor of Cereibacter sphaeroides (strain ATCC 17023 / DSM 158 / JCM 6121 / CCUG 31486 / LMG 2827 / NBRC 12203 / NCIMB 8253 / ATH 2.4.1.) (Rhodobacter sphaeroides).